Consider the following 557-residue polypeptide: Formate--tetrahydrofolate ligase 2 (557 aa).

ATP is bound at residue 66–73 (TPAGEGKT).

The protein belongs to the formate--tetrahydrofolate ligase family.

It carries out the reaction (6S)-5,6,7,8-tetrahydrofolate + formate + ATP = (6R)-10-formyltetrahydrofolate + ADP + phosphate. It participates in one-carbon metabolism; tetrahydrofolate interconversion. This Streptococcus pyogenes serotype M6 (strain ATCC BAA-946 / MGAS10394) protein is Formate--tetrahydrofolate ligase 2.